A 76-amino-acid polypeptide reads, in one-letter code: Theta defensin subunit A (76 aa).

A signal peptide spans 1-22; sequence MRTFALLTAMLLLVALHAQAEA. Residues 23–64 constitute a propeptide that is removed on maturation; the sequence is RQARADEAAAQQQPGADDQGMAHSFTWPENAALPLSESAKGL. The segment at 25-45 is disordered; that stretch reads ARADEAAAQQQPGADDQGMAH. Over residues 30–44 the composition is skewed to low complexity; that stretch reads AAAQQQPGADDQGMA. Residue Arg65 forms a Cyclopeptide (Arg-Cys) (interchain with C-73 in subunit A); in form BTD-3 linkage. A Cyclopeptide (Arg-Cys) (interchain with C-73 in subunit B); in form BTD-1 cross-link involves residue Arg65. A Cyclopeptide (Arg-Cys) (interchain with C-73 in subunit C); in form BTD-4 cross-link involves residue Arg65. Residue Arg65 forms a Cyclopeptide (Arg-Cys) (interchain with C-73 in subunit D); in form BTD-7 linkage. The cysteines at positions 68 and 73 are disulfide-linked. Residue Cys73 forms a Cyclopeptide (Cys-Arg) (interchain with R-65 in subunit A); in form BTD-3 linkage. Residue Cys73 forms a Cyclopeptide (Cys-Arg) (interchain with R-65 in subunit B); in form BTD-1 linkage. Cys73 is covalently cross-linked (Cyclopeptide (Cys-Arg) (interchain with R-65 in subunit C); in form BTD-4). Cys73 participates in a covalent cross-link: Cyclopeptide (Cys-Arg) (interchain with R-65 in subunit D); in form BTD-7. Positions 74 to 76 are excised as a propeptide; sequence RLL.

This sequence belongs to the alpha-defensin family. Theta subfamily. As to quaternary structure, BTD-1 is a cyclic heterodimer composed of subunits A and B; disulfide-linked. BTD-3 is a cyclic homodimer composed of two subunits A; disulfide-linked. BTD-4 is a cyclic heterodimer composed of subunits A and C; disulfide-linked. BTD-7 is a cyclic heterodimer composed of subunits A and D; disulfide-linked. In terms of processing, forms a cyclic peptide with subunit B (BTD-1), subunit A (BTD-3), subunit C (BTD-4), or subunit D (BTD-7). An additional intersubunit disulfide bond is formed.

Functionally, BTD-1, BTD-3, BTD-4 and BTD-7 have antimicrobial activity against the Gram-negative bacterium E.coli ML35, the Gram-positive bacterium S.aureus 502a, and the fungus C.albicans 16820. BTD-3 is more effective against E.coli than BTD-1, BTD-4 and BTD-7. The chain is Theta defensin subunit A (BTDA) from Papio anubis (Olive baboon).